A 115-amino-acid polypeptide reads, in one-letter code: Large ribosomal subunit protein bL20c (115 aa).

The protein belongs to the bacterial ribosomal protein bL20 family.

It localises to the plastid. Its subcellular location is the chloroplast. Binds directly to 23S ribosomal RNA and is necessary for the in vitro assembly process of the 50S ribosomal subunit. It is not involved in the protein synthesizing functions of that subunit. This chain is Large ribosomal subunit protein bL20c, found in Physcomitrium patens (Spreading-leaved earth moss).